The chain runs to 123 residues: Large ribosomal subunit protein bL12 (123 aa).

It belongs to the bacterial ribosomal protein bL12 family. As to quaternary structure, homodimer. Part of the ribosomal stalk of the 50S ribosomal subunit. Forms a multimeric L10(L12)X complex, where L10 forms an elongated spine to which 2 to 4 L12 dimers bind in a sequential fashion. Binds GTP-bound translation factors.

In terms of biological role, forms part of the ribosomal stalk which helps the ribosome interact with GTP-bound translation factors. Is thus essential for accurate translation. The protein is Large ribosomal subunit protein bL12 of Metamycoplasma arthritidis (strain 158L3-1) (Mycoplasma arthritidis).